The chain runs to 173 residues: Protein-export protein SecB (173 aa).

This sequence belongs to the SecB family. As to quaternary structure, homotetramer, a dimer of dimers. One homotetramer interacts with 1 SecA dimer.

It localises to the cytoplasm. Functionally, one of the proteins required for the normal export of preproteins out of the cell cytoplasm. It is a molecular chaperone that binds to a subset of precursor proteins, maintaining them in a translocation-competent state. It also specifically binds to its receptor SecA. The sequence is that of Protein-export protein SecB from Ralstonia nicotianae (strain ATCC BAA-1114 / GMI1000) (Ralstonia solanacearum).